The chain runs to 238 residues: Purine nucleoside phosphorylase DeoD-type (238 aa).

Residue histidine 4 participates in a purine D-ribonucleoside binding. Phosphate is bound by residues glycine 20, arginine 24, arginine 43, and 87-90 (RVGS). Residues 179-181 (EME) and 203-204 (SD) each bind a purine D-ribonucleoside. Aspartate 204 functions as the Proton donor in the catalytic mechanism.

The protein belongs to the PNP/UDP phosphorylase family. In terms of assembly, homohexamer; trimer of homodimers.

It catalyses the reaction a purine D-ribonucleoside + phosphate = a purine nucleobase + alpha-D-ribose 1-phosphate. It carries out the reaction a purine 2'-deoxy-D-ribonucleoside + phosphate = a purine nucleobase + 2-deoxy-alpha-D-ribose 1-phosphate. In terms of biological role, catalyzes the reversible phosphorolytic breakdown of the N-glycosidic bond in the beta-(deoxy)ribonucleoside molecules, with the formation of the corresponding free purine bases and pentose-1-phosphate. The polypeptide is Purine nucleoside phosphorylase DeoD-type (Histophilus somni (strain 129Pt) (Haemophilus somnus)).